A 695-amino-acid polypeptide reads, in one-letter code: Protein EARLY FLOWERING 3 (695 aa).

The segment covering 1–11 has biased composition (basic and acidic residues); sequence MKRGKDEEKIL. 5 disordered regions span residues 1-33, 48-75, 136-159, 216-283, and 541-653; these read MKRG…APPR, RFGD…SQPC, RSQS…VAPS, EKSA…REYS, and CSSQ…QTTR. The segment covering 54 to 74 has biased composition (polar residues); sequence TMNSRSNNTSTLVHPGPSSQP. Basic and acidic residues-rich tracts occupy residues 216 to 226, 234 to 253, and 260 to 283; these read EKSASSHDRVN, QESR…KDTD, and LATE…REYS. Positions 261–484 are interaction with ELF3; that stretch reads ATENHSQEGH…VMSPSEGLIY (224 aa). 2 stretches are compositionally biased toward polar residues: residues 551 to 567 and 579 to 588; these read PNEQ…LQNT and APQQQQQPTK. Composition is skewed to low complexity over residues 598–616 and 636–653; these read QGST…GSKS and TMTT…QTTR.

As to quaternary structure, interacts specifically with both Pr and Pfr forms of phytochrome B. Interacts with ELF4. May form a homodimer.

It localises to the nucleus. May be a transcription factor part of a circadian clock input pathway. Acts within a 'zeitnehmer' feedback loop and is involved in its own circadian regulation. Has no role in regulating circadian clock function in the dark. Part of a corepressor complex consisting of ELF4, ELF3, and LUX involved in the transcriptional regulation of APRR9. The activity of the protein may be decreased in long day conditions due to its interaction with phytochrome B (phyB). Can regulate the initiation of flowering independently of phyB. Also involved in responses to nematode parasitism, like the formation of the nematode feeding structure. The chain is Protein EARLY FLOWERING 3 (ELF3) from Arabidopsis thaliana (Mouse-ear cress).